Consider the following 214-residue polypeptide: Protein-L-isoaspartate O-methyltransferase 1 (214 aa).

Ser62 is a catalytic residue.

This sequence belongs to the methyltransferase superfamily. L-isoaspartyl/D-aspartyl protein methyltransferase family.

It localises to the cytoplasm. It catalyses the reaction [protein]-L-isoaspartate + S-adenosyl-L-methionine = [protein]-L-isoaspartate alpha-methyl ester + S-adenosyl-L-homocysteine. Its function is as follows. Catalyzes the methyl esterification of L-isoaspartyl residues in peptides and proteins that result from spontaneous decomposition of normal L-aspartyl and L-asparaginyl residues. It plays a role in the repair and/or degradation of damaged proteins. The sequence is that of Protein-L-isoaspartate O-methyltransferase 1 from Syntrophobacter fumaroxidans (strain DSM 10017 / MPOB).